Here is a 57-residue protein sequence, read N- to C-terminus: MGISVWQLLIILLIVVMLFGTKRLRGLGSDLGSAINGFRKSVSDGETTTQAEASSRS.

A helical transmembrane segment spans residues 1–21; that stretch reads MGISVWQLLIILLIVVMLFGT. The tract at residues 37–57 is disordered; sequence GFRKSVSDGETTTQAEASSRS. Residues 44–57 show a composition bias toward polar residues; the sequence is DGETTTQAEASSRS.

Belongs to the TatA/E family. In terms of assembly, the Tat system comprises two distinct complexes: a TatABC complex, containing multiple copies of TatA, TatB and TatC subunits, and a separate TatA complex, containing only TatA subunits. Substrates initially bind to the TatABC complex, which probably triggers association of the separate TatA complex to form the active translocon.

It is found in the cell inner membrane. Functionally, part of the twin-arginine translocation (Tat) system that transports large folded proteins containing a characteristic twin-arginine motif in their signal peptide across membranes. TatA could form the protein-conducting channel of the Tat system. This Stutzerimonas stutzeri (Pseudomonas stutzeri) protein is Sec-independent protein translocase protein TatA.